Consider the following 456-residue polypeptide: Ribosomal RNA small subunit methyltransferase F (456 aa).

Residues 109–115 (AAAPGGK), E133, R138, and D177 each bind S-adenosyl-L-methionine. C230 functions as the Nucleophile in the catalytic mechanism.

This sequence belongs to the class I-like SAM-binding methyltransferase superfamily. RsmB/NOP family.

The protein resides in the cytoplasm. The enzyme catalyses cytidine(1400) in 16S rRNA + S-adenosyl-L-methionine = 5-methylcytidine(1400) in 16S rRNA + S-adenosyl-L-homocysteine + H(+). The catalysed reaction is cytidine(1404) in 16S rRNA + S-adenosyl-L-methionine = 5-methylcytidine(1404) in 16S rRNA + S-adenosyl-L-homocysteine + H(+). It catalyses the reaction cytidine(1407) in 16S rRNA + S-adenosyl-L-methionine = 5-methylcytidine(1407) in 16S rRNA + S-adenosyl-L-homocysteine + H(+). Specifically methylates the cytosines at positions 1400 (m5C1400), 1404 (m5C1404) and 1407 (m5C1407) of 16S rRNA. C1400, C1404 and C1407 are methylated in a 30S subunit substrate, but only C1400 and C1404 are methylated when naked 16S rRNA is the substrate. Methylation by RsmF may facilitate growth at temperatures outside the optimal growth temperature. The chain is Ribosomal RNA small subunit methyltransferase F from Thermus thermophilus (strain ATCC 27634 / DSM 579 / HB8).